Reading from the N-terminus, the 237-residue chain is UPF0173 metal-dependent hydrolase BCAN_B0597 (237 aa).

The protein belongs to the UPF0173 family.

The polypeptide is UPF0173 metal-dependent hydrolase BCAN_B0597 (Brucella canis (strain ATCC 23365 / NCTC 10854 / RM-666)).